Consider the following 601-residue polypeptide: Glutathione-regulated potassium-efflux system protein KefB (601 aa).

The next 13 helical transmembrane spans lie at 5–25 (SLLM…PLAA), 29–49 (IGAV…GLGF), 55–75 (EILH…GLEL), 87–107 (IFGV…GLLW), 115–135 (AAII…LQLM), 152–172 (VLLF…LLAG), 180–202 (WMKL…YLLR), 207–227 (FIAA…LVLG), 230–250 (LFME…GILL), 268–288 (GLLL…GVLY), 291–311 (ILEI…VLYL), 324–344 (LQFS…FSAA), and 356–376 (PLLL…MQGV). Residues 400–519 (KPQVIVVGFG…AGVTQFSRET (120 aa)) form the RCK N-terminal domain.

Belongs to the monovalent cation:proton antiporter 2 (CPA2) transporter (TC 2.A.37) family. KefB subfamily. Interacts with the regulatory subunit KefG.

It is found in the cell inner membrane. Pore-forming subunit of a potassium efflux system that confers protection against electrophiles. Catalyzes K(+)/H(+) antiport. This chain is Glutathione-regulated potassium-efflux system protein KefB, found in Erwinia tasmaniensis (strain DSM 17950 / CFBP 7177 / CIP 109463 / NCPPB 4357 / Et1/99).